The chain runs to 86 residues: Small ribosomal subunit protein bS20 (86 aa).

The segment covering 1-27 has biased composition (basic residues); the sequence is MANSKSAKKRAIQAEKRRQHNASRRSM. Positions 1-28 are disordered; that stretch reads MANSKSAKKRAIQAEKRRQHNASRRSMM.

It belongs to the bacterial ribosomal protein bS20 family.

Functionally, binds directly to 16S ribosomal RNA. The chain is Small ribosomal subunit protein bS20 from Vibrio parahaemolyticus serotype O3:K6 (strain RIMD 2210633).